The chain runs to 300 residues: GTPase Era (300 aa).

The 169-residue stretch at 8 to 176 (RCGYVAIVGR…EALIAKHLPE (169 aa)) folds into the Era-type G domain. The interval 16 to 23 (GRPNVGKS) is G1. Residue 16-23 (GRPNVGKS) coordinates GTP. A G2 region spans residues 42–46 (QTTRH). The tract at residues 63–66 (DTPG) is G3. GTP-binding positions include 63 to 67 (DTPGM) and 125 to 128 (NKTD). Positions 125 to 128 (NKTD) are G4. The segment at 155–157 (ISA) is G5. Residues 199–283 (VREKIMRQLG…MLNLWVKVKG (85 aa)) form the KH type-2 domain.

The protein belongs to the TRAFAC class TrmE-Era-EngA-EngB-Septin-like GTPase superfamily. Era GTPase family. As to quaternary structure, monomer.

It localises to the cytoplasm. The protein localises to the cell inner membrane. An essential GTPase that binds both GDP and GTP, with rapid nucleotide exchange. Plays a role in 16S rRNA processing and 30S ribosomal subunit biogenesis and possibly also in cell cycle regulation and energy metabolism. The chain is GTPase Era from Pseudomonas putida (strain W619).